The following is a 336-amino-acid chain: Prenytransferase ascA (336 aa).

Residues 1–26 (MAAKSRSPKRGTSEKTPLVEKEAPYQ) form a disordered region. A compositionally biased stretch (basic and acidic residues) spans 11–23 (GTSEKTPLVEKEA). 8 helical membrane-spanning segments follow: residues 52-72 (PHGN…ASAI), 74-94 (PTEL…TFLM), 131-151 (GHVF…SLPI), 179-199 (VILG…VGLP), 206-226 (FVPT…YDVV), 251-271 (LEGL…TLGY), 272-292 (LVGM…FGLV), and 314-334 (FAIL…DYVV).

This sequence belongs to the UbiA prenyltransferase family. Requires Mg(2+) as cofactor.

Its subcellular location is the membrane. The enzyme catalyses orsellinate + (2E,6E)-farnesyl diphosphate = ilicicolinate B + diphosphate. The protein operates within secondary metabolite biosynthesis; terpenoid biosynthesis. Functionally, prenytransferase; part of the asc-1 gene cluster that mediates the biosynthesis of both ascochlorin and ascofuranone, a strong inhibitor of cyanide-insensitive alternative oxidases and a promising drug candidate against African trypanosomiasis. The first step in the pathway is performed by the non-reducing polyketide synthase ascC that produces orsellinic acid by condensing acetyl-CoA with 3 malonyl-CoA units. Orsellinic acid is then prenylated by the prenyltransferase ascA to yield ilicicolinic acid B. Ilicicolinic acid B is further reduced to ilicicolin B by the reductase ascB. The halogenase ascD then chlorinates ilicicolin B to produce ilicicolin A which is converted to ilicicolin A epoxide by the cytochrome P450 monooxygenase ascE that catalyzes stereoselective epoxidation of the terminal double bond of the prenyl group. Ilicicolin A epoxide is the last common precursor for the biosynthesis of ascofuranone and ascochlorin. The terpene cyclase ascF produces a monocyclic terpene, and the cyclization reaction is proposed to be initiated by protonation of the terminal epoxide of ilicicolin A epoxide to generate a monocyclic tertiarycation, which is followed by a series of hydride and methyl shifts with abstraction of proton, leading to the formation of the (14S,15R,19R)-trimethylcyclohexanone ring structure of ilicicolin C, which is finally reduced to ascochlorin by the dehydrogenase ascG. On the other hand, ilicicolin A epoxide is hydroxylated by the cytochrome P450 monooxygenase ascH, and the resultant product is cyclized by the terpene cyclase ascI to ascofuranol via protonation-initiated epoxide ring opening, which facilitates the 6-endo-tet cyclization to form the tetrahy-drofuran ring. Finally, ascofuranol is oxidized into ascofuranone by ascJ. This Acremonium egyptiacum (Oospora egyptiaca) protein is Prenytransferase ascA.